A 901-amino-acid polypeptide reads, in one-letter code: Aconitate hydratase A (901 aa).

Positions 443, 509, and 512 each coordinate [4Fe-4S] cluster.

It belongs to the aconitase/IPM isomerase family. In terms of assembly, monomer. [4Fe-4S] cluster is required as a cofactor.

It catalyses the reaction citrate = D-threo-isocitrate. The catalysed reaction is (2S,3R)-3-hydroxybutane-1,2,3-tricarboxylate = 2-methyl-cis-aconitate + H2O. It functions in the pathway carbohydrate metabolism; tricarboxylic acid cycle; isocitrate from oxaloacetate: step 2/2. The protein operates within organic acid metabolism; propanoate degradation. Its function is as follows. Involved in the catabolism of short chain fatty acids (SCFA) via the tricarboxylic acid (TCA)(acetyl degradation route) and probably the 2-methylcitrate cycle I (propionate degradation route). Catalyzes the reversible isomerization of citrate to isocitrate via cis-aconitate. Could catalyze the hydration of 2-methyl-cis-aconitate to yield (2R,3S)-2-methylisocitrate. The apo form of AcnA functions as a RNA-binding regulatory protein. In Staphylococcus aureus (strain COL), this protein is Aconitate hydratase A (acnA).